Reading from the N-terminus, the 294-residue chain is tRNA dimethylallyltransferase (294 aa).

Residue 11-18 (GPTAVGKT) participates in ATP binding. 13–18 (TAVGKT) is a binding site for substrate. Residues 36–39 (DSQQ) form an interaction with substrate tRNA region.

The protein belongs to the IPP transferase family. As to quaternary structure, monomer. It depends on Mg(2+) as a cofactor.

The enzyme catalyses adenosine(37) in tRNA + dimethylallyl diphosphate = N(6)-dimethylallyladenosine(37) in tRNA + diphosphate. Catalyzes the transfer of a dimethylallyl group onto the adenine at position 37 in tRNAs that read codons beginning with uridine, leading to the formation of N6-(dimethylallyl)adenosine (i(6)A). This is tRNA dimethylallyltransferase from Lactococcus lactis subsp. cremoris (strain SK11).